Here is a 196-residue protein sequence, read N- to C-terminus: 7-methyl-GTP pyrophosphatase (196 aa).

The Proton acceptor role is filled by D69.

The protein belongs to the Maf family. YceF subfamily. The cofactor is a divalent metal cation.

It localises to the cytoplasm. The enzyme catalyses N(7)-methyl-GTP + H2O = N(7)-methyl-GMP + diphosphate + H(+). In terms of biological role, nucleoside triphosphate pyrophosphatase that hydrolyzes 7-methyl-GTP (m(7)GTP). May have a dual role in cell division arrest and in preventing the incorporation of modified nucleotides into cellular nucleic acids. This chain is 7-methyl-GTP pyrophosphatase, found in Photorhabdus laumondii subsp. laumondii (strain DSM 15139 / CIP 105565 / TT01) (Photorhabdus luminescens subsp. laumondii).